The chain runs to 201 residues: Large ribosomal subunit protein eL15 (201 aa).

Belongs to the eukaryotic ribosomal protein eL15 family.

The polypeptide is Large ribosomal subunit protein eL15 (RPL15) (Quercus suber (Cork oak)).